We begin with the raw amino-acid sequence, 100 residues long: Urease subunit gamma (100 aa).

It belongs to the urease gamma subunit family. In terms of assembly, heterotrimer of UreA (gamma), UreB (beta) and UreC (alpha) subunits. Three heterotrimers associate to form the active enzyme.

It localises to the cytoplasm. It catalyses the reaction urea + 2 H2O + H(+) = hydrogencarbonate + 2 NH4(+). Its pathway is nitrogen metabolism; urea degradation; CO(2) and NH(3) from urea (urease route): step 1/1. The protein is Urease subunit gamma of Mycobacterium sp. (strain JLS).